The following is a 185-amino-acid chain: Ribosome-recycling factor (185 aa).

Belongs to the RRF family.

It is found in the cytoplasm. Responsible for the release of ribosomes from messenger RNA at the termination of protein biosynthesis. May increase the efficiency of translation by recycling ribosomes from one round of translation to another. The sequence is that of Ribosome-recycling factor from Buchnera aphidicola subsp. Acyrthosiphon pisum (strain APS) (Acyrthosiphon pisum symbiotic bacterium).